A 447-amino-acid chain; its full sequence is UDP-N-acetylmuramate--L-alanine ligase (447 aa).

Residue 108-114 (GSHGKTS) coordinates ATP.

The protein belongs to the MurCDEF family.

It is found in the cytoplasm. The enzyme catalyses UDP-N-acetyl-alpha-D-muramate + L-alanine + ATP = UDP-N-acetyl-alpha-D-muramoyl-L-alanine + ADP + phosphate + H(+). Its pathway is cell wall biogenesis; peptidoglycan biosynthesis. Cell wall formation. The polypeptide is UDP-N-acetylmuramate--L-alanine ligase (Listeria welshimeri serovar 6b (strain ATCC 35897 / DSM 20650 / CCUG 15529 / CIP 8149 / NCTC 11857 / SLCC 5334 / V8)).